We begin with the raw amino-acid sequence, 332 residues long: Probable ABC transporter permease protein YphD (332 aa).

The next 10 helical transmembrane spans lie at 28–48 (GLLVVIAILYLVFSLNAPGFI), 63–83 (IGIAAWAMTLIIISGEIDVSV), 84–104 (GPMVAFVSVCLAFLLQFEVPL), 105–125 (AVACLLVLLLGALMGTLAGVL), 131–151 (VPSFVATLGLWSALRGMGLFM), 172–192 (FLGVPVSALIMIVLFALFVFI), 222–242 (VRILIFTLSGLLAAVTGILLA), 251–271 (GAANGLEFDVIAAVVVGGTAL), 278–298 (LFGTLLGVLVITLIGNGLVLL), and 303–323 (FFQQVVRGVIIVVAVLANILL).

This sequence belongs to the binding-protein-dependent transport system permease family. AraH/RbsC subfamily.

The protein localises to the cell inner membrane. Its function is as follows. Probably part of the binding-protein-dependent transport system YphDEF. Probably responsible for the translocation of the substrate across the membrane. In Escherichia coli (strain K12), this protein is Probable ABC transporter permease protein YphD (yphD).